Consider the following 69-residue polypeptide: Putative membrane protein insertion efficiency factor (69 aa).

The protein belongs to the UPF0161 family.

It localises to the cell inner membrane. Its function is as follows. Could be involved in insertion of integral membrane proteins into the membrane. This Geobacter sulfurreducens (strain ATCC 51573 / DSM 12127 / PCA) protein is Putative membrane protein insertion efficiency factor.